The sequence spans 295 residues: HTH-type transcriptional regulator TdfR (295 aa).

In terms of domain architecture, HTH lysR-type spans 1-58 (MEFRQLRYFVAAAEEGNVGAAARRLHISQPPVTRQIHALEQHLGVLLFERSARGVQLT). The segment at residues 18 to 37 (VGAAARRLHISQPPVTRQIH) is a DNA-binding region (H-T-H motif).

This sequence belongs to the LysR transcriptional regulatory family.

It localises to the cytoplasm. Involved in the regulation of 3-chlorocatechol degradation. Transcriptional regulator of tfdB expression. Acts as a repressor in the absence of its effector (either 2-cis-chlorodiene lactone or chloromaleylacetate) but acts as an activator when its effector is present. The protein is HTH-type transcriptional regulator TdfR (tfdR) of Cupriavidus pinatubonensis (strain JMP 134 / LMG 1197) (Cupriavidus necator (strain JMP 134)).